A 320-amino-acid chain; its full sequence is Pantothenate kinase (320 aa).

Position 96–103 (96–103 (GSVAVGKS)) interacts with ATP.

The protein belongs to the prokaryotic pantothenate kinase family.

Its subcellular location is the cytoplasm. It carries out the reaction (R)-pantothenate + ATP = (R)-4'-phosphopantothenate + ADP + H(+). It functions in the pathway cofactor biosynthesis; coenzyme A biosynthesis; CoA from (R)-pantothenate: step 1/5. The chain is Pantothenate kinase from Brevibacillus brevis (strain 47 / JCM 6285 / NBRC 100599).